The chain runs to 961 residues: Ras-interacting protein 1 (961 aa).

The segment covering 1-10 (MLSGERKEGG) has biased composition (basic and acidic residues). 3 disordered regions span residues 1–21 (MLSG…HLPV), 35–70 (LGRR…PHVE), and 96–116 (RGSG…QRWA). The segment covering 41-57 (SAASVKSSSSDTGSRSS) has biased composition (low complexity). A compositionally biased stretch (pro residues) spans 59 to 68 (PLPPPPPPPH). The residue at position 96 (Arg-96) is an Omega-N-methylarginine. Gly residues predominate over residues 98-110 (SGAGGAGGPGTPG). The 113-residue stretch at 141–253 (PPGVLKIFAS…RRFELRGREE (113 aa)) folds into the Ras-associating domain. Residues 261-352 (AFGAADADGT…MAPGAADAQM (92 aa)) are disordered. 2 positions are modified to phosphoserine: Ser-274 and Ser-286. Positions 284–295 (AASGGAALASPG) are enriched in low complexity. Over residues 296 to 307 (PGSGSGTPTGSG) the composition is skewed to gly residues. A compositionally biased stretch (low complexity) spans 314–327 (NLSLRRSVSELSLQ). A phosphoserine mark is found at Ser-320, Ser-322, Ser-325, and Ser-413. The 302-residue stretch at 594–895 (GRLARLIKEA…PPAERDAVDT (302 aa)) folds into the Dilute domain.

In terms of assembly, interacts with Ras family members that have been activated by GTP binding. Interacts with HRAS, RAP1A, RAP2, RRAS, RAF1 and RRAS2. Interacts with MYH9 and ARHGAP29. As to expression, detected in kidney, heart, skeletal muscle, small intestine and lung.

The protein localises to the cytoplasm. The protein resides in the perinuclear region. It localises to the golgi apparatus. Its subcellular location is the golgi stack. Functionally, required for the proper formation of vascular structures that develop via both vasculogenesis and angiogenesis. Acts as a critical and vascular-specific regulator of GTPase signaling, cell architecture, and adhesion, which is essential for endothelial cell morphogenesis and blood vessel tubulogenesis. Regulates the activity of Rho GTPases in part by recruiting ARHGAP29 and suppressing RhoA signaling and dampening ROCK and MYH9 activities in endothelial cells. May act as effector for Golgi-bound HRAS and other Ras-like proteins. May promote HRAS-mediated transformation. Negative regulator of amino acid starvation-induced autophagy. The polypeptide is Ras-interacting protein 1 (Rasip1) (Mus musculus (Mouse)).